A 354-amino-acid polypeptide reads, in one-letter code: Ubiquinol oxidase 1a, mitochondrial (354 aa).

A mitochondrion-targeting transit peptide spans 1–62; the sequence is MMITRGGAKA…RAPTIGGMRF (62 aa). A disordered region spans residues 68-99; it reads LGEKTPMKEEDANQKKTENESTGGDAAGGNNK. Positions 72 to 86 are enriched in basic and acidic residues; it reads TPMKEEDANQKKTEN. A helical transmembrane segment spans residues 179 to 199; the sequence is AMMLETVAAVPGMVGGMLLHC. Residues E183, E222, and H225 each coordinate Fe cation. A helical membrane pass occupies residues 241–261; sequence ALVITVQGVFFNAYFLGYLIS. Positions 273, 324, and 327 each coordinate Fe cation.

The protein belongs to the alternative oxidase family. As to quaternary structure, homodimer; disulfide-linked. It depends on Fe cation as a cofactor. As to expression, expressed in roots, stems, cotyledons, leaves and flowers. High expression in sepals.

It is found in the mitochondrion inner membrane. It carries out the reaction 2 a ubiquinol + O2 = 2 a ubiquinone + 2 H2O. With respect to regulation, when the two monomeric subunits are covalently linked by a S-S bond, the enzyme is essentially inactive. When the disulfide bond is reduced, its component sulfhydryls can associate with K-keto acids through formation of a thiohemiacetal, resulting in enzyme activation. Activated by glyoxylate, irrespective to the substitution found at Cys-127. That suggests the presence of a second activation site, possibly Cys-177. Its function is as follows. Catalyzes the cyanide-resistant oxidation of ubiquinol and the reduction of molecular oxygen to water, but does not translocate protons and consequently is not linked to oxidative phosphorylation. Increases respiration when the cytochrome respiratory pathway is restricted, or in response to low temperatures. The protein is Ubiquinol oxidase 1a, mitochondrial (AOX1A) of Arabidopsis thaliana (Mouse-ear cress).